A 75-amino-acid chain; its full sequence is Putative DNA-directed RNA polymerase subunit omega (75 aa).

The protein belongs to the RNA polymerase subunit omega family.

Its subcellular location is the plastid. It is found in the chloroplast. The enzyme catalyses RNA(n) + a ribonucleoside 5'-triphosphate = RNA(n+1) + diphosphate. In terms of biological role, may be involved in RNA polymerase activity. This chain is Putative DNA-directed RNA polymerase subunit omega (rpoZ), found in Mesostigma viride (Green alga).